The primary structure comprises 107 residues: Transcription initiation factor IIA subunit 2-2 (107 aa).

The protein belongs to the TFIIA subunit 2 family. TFIIA is a heterodimer of the large unprocessed subunit 1 and a small subunit gamma. It was originally believed to be a heterotrimer of an alpha (p30), a beta (p20) and a gamma (p14) subunit.

It localises to the nucleus. In terms of biological role, TFIIA is a component of the transcription machinery of RNA polymerase II and plays an important role in transcriptional activation. TFIIA in a complex with TBP mediates transcriptional activity. The protein is Transcription initiation factor IIA subunit 2-2 (TfIIA-S-2) of Drosophila melanogaster (Fruit fly).